A 474-amino-acid polypeptide reads, in one-letter code: Cryptochrome DASH (474 aa).

The 135-residue stretch at 2 to 136 folds into the Photolyase/cryptochrome alpha/beta domain; the sequence is DTAVVWFRDD…ALRQRWTHTL (135 aa). A compositionally biased stretch (basic and acidic residues) spans 161–171; that stretch reads EAAATVRDPRS. Positions 161-202 are disordered; sequence EAAATVRDPRSAPETVPTPDGLTPGPVPTVESLGVSEPPTDD.

Belongs to the DNA photolyase class-1 family. FAD serves as cofactor. The cofactor is (6R)-5,10-methylene-5,6,7,8-tetrahydrofolate.

May have a photoreceptor function. Binds DNA; probably functions as a transcriptional repressor. This Natronomonas pharaonis (strain ATCC 35678 / DSM 2160 / CIP 103997 / JCM 8858 / NBRC 14720 / NCIMB 2260 / Gabara) (Halobacterium pharaonis) protein is Cryptochrome DASH (cry).